The sequence spans 416 residues: Probable protein phosphatase 2C 49 (416 aa).

The PPM-type phosphatase domain maps to 91 to 411 (RYGVTSVFGR…DNVSVVVVDL (321 aa)). Mn(2+)-binding residues include Asp131, Gly132, and Asp319. Residues 343–360 (PPSPPGCSRPKAVLPPPA) are compositionally biased toward pro residues. Residues 343–368 (PPSPPGCSRPKAVLPPPAGASGGGGG) are disordered. Asp402 provides a ligand contact to Mn(2+).

It belongs to the PP2C family. Mg(2+) serves as cofactor. Requires Mn(2+) as cofactor.

It carries out the reaction O-phospho-L-seryl-[protein] + H2O = L-seryl-[protein] + phosphate. The catalysed reaction is O-phospho-L-threonyl-[protein] + H2O = L-threonyl-[protein] + phosphate. The protein is Probable protein phosphatase 2C 49 of Oryza sativa subsp. japonica (Rice).